Reading from the N-terminus, the 519-residue chain is Protein disulfide-isomerase A5 (519 aa).

The first 21 residues, 1-21 (MARAGPAWLLLAIWVVLPSWL), serve as a signal peptide directing secretion. Intrachain disulfides connect cysteine 85-cysteine 94, cysteine 182-cysteine 185, cysteine 305-cysteine 308, and cysteine 426-cysteine 429. 3 consecutive Thioredoxin domains span residues 134-261 (FLKD…NPQP), 270-384 (PWAD…NPEA), and 378-506 (WMQN…ALRE). A Prevents secretion from ER motif is present at residues 516-519 (KEEL).

This sequence belongs to the protein disulfide isomerase family. In terms of assembly, interacts with CALR (via P-domain).

It is found in the endoplasmic reticulum lumen. It catalyses the reaction Catalyzes the rearrangement of -S-S- bonds in proteins.. The sequence is that of Protein disulfide-isomerase A5 (PDIA5) from Homo sapiens (Human).